Consider the following 304-residue polypeptide: MSTDSDHTHPIPPAFQEYDTQKLRQSPAFGHGKHGIADLVVGREDNKPTRLLSDFLRVPYHLSGTLDSDPVDELITVCLQDPTGAITQGDRHSLTVTARPDAYAHITNQSASKVQTMKASYAHLEATLIAESGAYLEYLPEPTILNEDARCLQTTTVEMAPDATVIVGDVFVPDGLSAHEPFSFDHYHSRTDARVEQRLICADAVNLQPAQRDPRNLATIGEYTVIGNLYVFSPGADVEAIAEMVHQRLTDHEGAAGVSTLRNEAGITVRALGDRSTDVTAAIEAAWDETRRELLGVGAPLGDR.

The protein belongs to the UreD family. UreD, UreF and UreG form a complex that acts as a GTP-hydrolysis-dependent molecular chaperone, activating the urease apoprotein by helping to assemble the nickel containing metallocenter of UreC. The UreE protein probably delivers the nickel.

The protein localises to the cytoplasm. Functionally, required for maturation of urease via the functional incorporation of the urease nickel metallocenter. This Haloquadratum walsbyi (strain DSM 16790 / HBSQ001) protein is Urease accessory protein UreD.